Reading from the N-terminus, the 64-residue chain is uncharacterized protein (64 aa).

This is an uncharacterized protein from Dictyostelium discoideum (Social amoeba).